We begin with the raw amino-acid sequence, 510 residues long: Leucine-rich repeat-containing protein 14B (510 aa).

One copy of the LRR 1; degenerate repeat lies at 100–137 (SNRLRVADFTGIQDVQVQQCPCGRALGRWGRTKVLART). The LRR 2; degenerate repeat unit spans residues 181 to 205 (QVCCPSLRADSLSPGQLLQVLGLAG). The stretch at 234–273 (FPQLTSLTLPTKAFDAPPTCAPDPEGEDLLLTSIAWELSQ) is one LRR 4; degenerate repeat. LRR repeat units lie at residues 274–298 (MNQL…LSPL), 299–330 (KTPL…AHLE), 331–349 (VLDL…TFFR), 355–382 (AQTL…GLSP), and 383–407 (CSQL…LFAA).

This sequence belongs to the PRAME family. LRRC14 subfamily.

The protein is Leucine-rich repeat-containing protein 14B of Mus musculus (Mouse).